A 235-amino-acid chain; its full sequence is DUP240 protein DFP4 (235 aa).

Residues 1-44 are Cytoplasmic-facing; that stretch reads MSSELLISNSKPRPEGLRKLCEGETVILPRDITPSKCAYFLKQN. The helical transmembrane segment at 45 to 65 threads the bilayer; that stretch reads IVFISYIFIHIIITIILNRLA. Topologically, residues 66-72 are extracellular; the sequence is LSAHGNT. The helical transmembrane segment at 73–93 threads the bilayer; that stretch reads LIIILAALLITISLFLLLLLP. Residues 94–235 lie on the Cytoplasmic side of the membrane; the sequence is YLSCSRYKLR…DKYPEMGVTV (142 aa).

This sequence belongs to the DUP/COS family. Interacts according to large scale protein interaction studies with BZZ1, SRB4 and SUA7.

It is found in the cell membrane. This is DUP240 protein DFP4 from Saccharomyces cerevisiae (strain ATCC 204508 / S288c) (Baker's yeast).